The chain runs to 221 residues: MQRRGWFITFEGIDGAGKSSHIEAVAEALRREGRTVTVTREPGGTPLAETLRSLLLNEAMDALTESLVVFAGRRDHLRSVIAPALVRGEVVLCDRFTDATFAYQGAGRGFDRAVLAQLERITQSGLQEGTDAVLHPHLTLWFDLAPDVAAARLEGARAPDRFEAQPVEFFRRVAQGYADRAAADPGRFARLDADQPREAVRAQLMEILHRRGVLDAAQEGG.

Position 12–19 (12–19 (GIDGAGKS)) interacts with ATP.

The protein belongs to the thymidylate kinase family.

It catalyses the reaction dTMP + ATP = dTDP + ADP. In terms of biological role, phosphorylation of dTMP to form dTDP in both de novo and salvage pathways of dTTP synthesis. The polypeptide is Thymidylate kinase (Paracidovorax citrulli (strain AAC00-1) (Acidovorax citrulli)).